The chain runs to 75 residues: Protein RALF-like 9 (75 aa).

Residues 1–28 (MGMSKSIKVILSLALVVFLALAATKVEA) form the signal peptide. Cystine bridges form between Cys46–Cys54 and Cys66–Cys72.

This sequence belongs to the plant rapid alkalinization factor (RALF) family.

It localises to the secreted. Its function is as follows. Cell signaling peptide that may regulate plant stress, growth, and development. Mediates a rapid alkalinization of extracellular space by mediating a transient increase in the cytoplasmic Ca(2+) concentration leading to a calcium-dependent signaling events through a cell surface receptor and a concomitant activation of some intracellular mitogen-activated protein kinases. The polypeptide is Protein RALF-like 9 (RALFL9) (Arabidopsis thaliana (Mouse-ear cress)).